Here is a 142-residue protein sequence, read N- to C-terminus: Large ribosomal subunit protein uL11 (142 aa).

Belongs to the universal ribosomal protein uL11 family. In terms of assembly, part of the ribosomal stalk of the 50S ribosomal subunit. Interacts with L10 and the large rRNA to form the base of the stalk. L10 forms an elongated spine to which L12 dimers bind in a sequential fashion forming a multimeric L10(L12)X complex. In terms of processing, one or more lysine residues are methylated.

Its function is as follows. Forms part of the ribosomal stalk which helps the ribosome interact with GTP-bound translation factors. In Tolumonas auensis (strain DSM 9187 / NBRC 110442 / TA 4), this protein is Large ribosomal subunit protein uL11.